The following is a 322-amino-acid chain: TATA box-binding protein-like 2 (322 aa).

Positions 31–54 (PALSSTQDSTYLSGRAGPSRESGA) are disordered. Residues 32 to 42 (ALSSTQDSTYL) are compositionally biased toward polar residues.

This sequence belongs to the TBP family.

It is found in the nucleus. TATA box-binding transcription factor. Members of the TBP family are differentially required to regulate transcription and development during early embryogenesis. In Takifugu rubripes (Japanese pufferfish), this protein is TATA box-binding protein-like 2.